We begin with the raw amino-acid sequence, 131 residues long: Profilin-2 (131 aa).

Belongs to the profilin family. Occurs in many kinds of cells as a complex with monomeric actin in a 1:1 ratio.

Its subcellular location is the cytoplasm. The protein resides in the cytoskeleton. Its function is as follows. Binds to actin and affects the structure of the cytoskeleton. At high concentrations, profilin prevents the polymerization of actin, whereas it enhances it at low concentrations. By binding to PIP2, it inhibits the formation of IP3 and DG. The polypeptide is Profilin-2 (Malus domestica (Apple)).